We begin with the raw amino-acid sequence, 164 residues long: uncharacterized protein (164 aa).

Polar residues predominate over residues 1-29 (MLCVRSSSSNLESDTYLSRYSTRASAGTG). The segment at 1–62 (MLCVRSSSSN…SKPSNNKNID (62 aa)) is disordered. Residues 43–62 (SSDSSSSSSESKPSNNKNID) are compositionally biased toward low complexity.

This is an uncharacterized protein from Schizosaccharomyces pombe (strain 972 / ATCC 24843) (Fission yeast).